The primary structure comprises 1386 residues: YLP motif-containing protein 1 (1386 aa).

Disordered stretches follow at residues 1-336 (MYPN…EDAR) and 517-1068 (TSIP…PPGR). Residues 14–27 (YPPPPVPPPPPPVA) show a composition bias toward pro residues. 2 stretches are compositionally biased toward low complexity: residues 31-50 (ASPG…SSSG) and 59-80 (LAQL…LQPH). 5 stretches are compositionally biased toward pro residues: residues 81 to 93 (HLPP…PPVM), 102 to 114 (QPPP…PPGP), 148 to 158 (PESPPVPPGSY), 166 to 176 (MPPPQPPPSYY), and 184 to 203 (YLPP…PPSI). Residues 237 to 259 (STMTPQEQQQYWYRQHLLSLQQR) are compositionally biased toward polar residues. The span at 260–270 (TKVHLPGHKKG) shows a compositional bias: basic residues. The segment covering 276 to 285 (DVPEPIKEEA) has biased composition (basic and acidic residues). Pro residues predominate over residues 302-317 (PPLPPPNEEAPPPLSP). Over residues 320 to 333 (PQSEDSEDSEDSEE) the composition is skewed to acidic residues. 3 stretches are compositionally biased toward pro residues: residues 517–558 (TSIP…PPPA), 566–603 (PVLP…PQGM), and 641–650 (PPSPYHPPPQ). Over residues 651–667 (SEQVNSKPLNKVFSSEQ) the composition is skewed to polar residues. Lys683 is subject to N6-methyllysine. Over residues 706–722 (RGPREQKEQLQKLKDFG) the composition is skewed to basic and acidic residues. Positions 746-761 (MYPPPGSYRPPPPMGK) are enriched in pro residues. The segment covering 762-779 (PPGSIVRPSAPPARSSIP) has biased composition (low complexity). Composition is skewed to pro residues over residues 781–803 (TRPP…PPPV) and 848–878 (PVLP…PPPV). Lys894 is covalently cross-linked (Glycyl lysine isopeptide (Lys-Gly) (interchain with G-Cter in SUMO2)). Composition is skewed to basic and acidic residues over residues 904–938 (ITLR…EPYF), 945–1014 (TDHR…DRPP), 1023–1033 (GERRTYPEERM), and 1049–1068 (RVEK…PPGR). Lys951 participates in a covalent cross-link: Glycyl lysine isopeptide (Lys-Gly) (interchain with G-Cter in SUMO2). Residues 1336 to 1343 (KKRVRWAD) are involved in interaction with PPP1CA.

Interacts with PPP1CA and NCOA5. Forms a complex with ILF2, ILF3, KHDRBS1, RBMX, NCOA5 and PPP1CA.

It localises to the nucleus. Its subcellular location is the nucleus speckle. Plays a role in the reduction of telomerase activity during differentiation of embryonic stem cells by binding to the core promoter of TERT and controlling its down-regulation. In Mus musculus (Mouse), this protein is YLP motif-containing protein 1 (Ylpm1).